A 603-amino-acid polypeptide reads, in one-letter code: Arginine--tRNA ligase (603 aa).

The 'HIGH' region signature appears at 143 to 153 (PNIAKEMHVGH).

It belongs to the class-I aminoacyl-tRNA synthetase family. In terms of assembly, monomer.

The protein resides in the cytoplasm. It catalyses the reaction tRNA(Arg) + L-arginine + ATP = L-arginyl-tRNA(Arg) + AMP + diphosphate. The protein is Arginine--tRNA ligase of Prochlorococcus marinus (strain MIT 9303).